Consider the following 396-residue polypeptide: S-adenosylmethionine synthase (396 aa).

H14 lines the ATP pocket. Residue D16 coordinates Mg(2+). E42 is a K(+) binding site. The L-methionine site is built by E55 and Q98. The flexible loop stretch occupies residues 98-108 (QSPDIALGVNK). Residues 174 to 176 (DGK), 241 to 242 (RF), D250, 256 to 257 (RK), A273, and K277 contribute to the ATP site. Position 250 (D250) interacts with L-methionine. Residue K281 coordinates L-methionine.

The protein belongs to the AdoMet synthase family. In terms of assembly, homotetramer; dimer of dimers. Mg(2+) is required as a cofactor. The cofactor is K(+).

The protein localises to the cytoplasm. The catalysed reaction is L-methionine + ATP + H2O = S-adenosyl-L-methionine + phosphate + diphosphate. It functions in the pathway amino-acid biosynthesis; S-adenosyl-L-methionine biosynthesis; S-adenosyl-L-methionine from L-methionine: step 1/1. Catalyzes the formation of S-adenosylmethionine (AdoMet) from methionine and ATP. The overall synthetic reaction is composed of two sequential steps, AdoMet formation and the subsequent tripolyphosphate hydrolysis which occurs prior to release of AdoMet from the enzyme. The polypeptide is S-adenosylmethionine synthase (Pseudothermotoga lettingae (strain ATCC BAA-301 / DSM 14385 / NBRC 107922 / TMO) (Thermotoga lettingae)).